A 115-amino-acid polypeptide reads, in one-letter code: Large ribosomal subunit protein uL24 (115 aa).

This sequence belongs to the universal ribosomal protein uL24 family. As to quaternary structure, part of the 50S ribosomal subunit.

Its function is as follows. One of two assembly initiator proteins, it binds directly to the 5'-end of the 23S rRNA, where it nucleates assembly of the 50S subunit. One of the proteins that surrounds the polypeptide exit tunnel on the outside of the subunit. This chain is Large ribosomal subunit protein uL24, found in Phytoplasma mali (strain AT).